The chain runs to 168 residues: Large ribosomal subunit protein bL9 (168 aa).

Residues 148-168 (ENGEGSVQPAAEAAEVASTEA) are disordered. Residues 157–168 (AAEAAEVASTEA) show a composition bias toward low complexity.

This sequence belongs to the bacterial ribosomal protein bL9 family.

In terms of biological role, binds to the 23S rRNA. The polypeptide is Large ribosomal subunit protein bL9 (Herpetosiphon aurantiacus (strain ATCC 23779 / DSM 785 / 114-95)).